A 448-amino-acid polypeptide reads, in one-letter code: Protein chibby homolog 2 (448 aa).

Phosphoserine occurs at positions 41, 86, 89, 97, 124, 144, 148, and 150. A coiled-coil region spans residues 164–198 (KECMLQEENKSLREENKALREENRMLSKENKILQV). A phosphoserine mark is found at S212 and S225. The stretch at 242–267 (KEDSTLQLLREENRALQQLLEQKQAY) forms a coiled coil. The disordered stretch occupies residues 270-323 (QAEDTAAPAEESKPAPSPHEEPCSPGLLQDQGSGLSSRFEEPKGPPARQEDSKE). Composition is skewed to basic and acidic residues over residues 279–291 (EESKPAPSPHEEP) and 307–323 (RFEEPKGPPARQEDSKE). Residues S335 and S338 each carry the phosphoserine modification. A coiled-coil region spans residues 356-414 (LQLLREMRQALQALLKENRLLQEENRTLQVLRAEHRGFQEENKALWENNKLKLQQKLVI).

This sequence belongs to the chibby family. SPERT subfamily. As to quaternary structure, homodimer. Binds to NEK1. Testis-specific.

This chain is Protein chibby homolog 2, found in Homo sapiens (Human).